A 629-amino-acid chain; its full sequence is Chaperone protein HtpG (629 aa).

Positions 1–343 (MQKQTLSFQA…SSDLPLNVSR (343 aa)) are a; substrate-binding. Positions 344–558 (ELLQESRAVK…DGDMSTQLAR (215 aa)) are b. Residues 559 to 629 (MLKQAGQTVP…YVRRVNALLV (71 aa)) form a c region.

This sequence belongs to the heat shock protein 90 family. In terms of assembly, homodimer.

It localises to the cytoplasm. Functionally, molecular chaperone. Has ATPase activity. This chain is Chaperone protein HtpG, found in Polaromonas naphthalenivorans (strain CJ2).